The sequence spans 311 residues: Aspartate carbamoyltransferase catalytic subunit (311 aa).

The carbamoyl phosphate site is built by Arg-59 and Thr-60. Lys-87 contacts L-aspartate. Residues Arg-109, His-139, and Gln-142 each contribute to the carbamoyl phosphate site. L-aspartate contacts are provided by Arg-172 and Arg-224. Carbamoyl phosphate-binding residues include Ala-265 and Pro-266.

It belongs to the aspartate/ornithine carbamoyltransferase superfamily. ATCase family. As to quaternary structure, heterododecamer (2C3:3R2) of six catalytic PyrB chains organized as two trimers (C3), and six regulatory PyrI chains organized as three dimers (R2).

The enzyme catalyses carbamoyl phosphate + L-aspartate = N-carbamoyl-L-aspartate + phosphate + H(+). It participates in pyrimidine metabolism; UMP biosynthesis via de novo pathway; (S)-dihydroorotate from bicarbonate: step 2/3. In terms of biological role, catalyzes the condensation of carbamoyl phosphate and aspartate to form carbamoyl aspartate and inorganic phosphate, the committed step in the de novo pyrimidine nucleotide biosynthesis pathway. The polypeptide is Aspartate carbamoyltransferase catalytic subunit (Streptococcus pyogenes serotype M4 (strain MGAS10750)).